The following is a 300-amino-acid chain: N-carbamoylputrescine amidase (300 aa).

A CN hydrolase domain is found at 8-266; it reads VTVAALQFAC…EAVLVAQFDL (259 aa). Glutamate 47 serves as the catalytic Proton acceptor. Lysine 120 serves as the catalytic Proton donor. Cysteine 157 functions as the Nucleophile in the catalytic mechanism.

The protein belongs to the carbon-nitrogen hydrolase superfamily. As to quaternary structure, homooctamer.

It carries out the reaction N-carbamoylputrescine + H2O + 2 H(+) = putrescine + NH4(+) + CO2. It functions in the pathway amine and polyamine biosynthesis; putrescine biosynthesis via agmatine pathway; putrescine from N-carbamoylputrescine (amidase route): step 1/1. Functionally, involved in polyamine biosynthesis. The chain is N-carbamoylputrescine amidase (CPA) from Solanum tuberosum (Potato).